Reading from the N-terminus, the 148-residue chain is MTDQGMTDQSMKSRLVELLIVHVLRKGKKSLARRIVYEALKRIEERNQQSGVLMLEQAVSQVMPLVCVKARRVGGATYQVPQEVKPYTGINNALRWIVKYAKDRSGKSMAIKLAAEIWDAAHGTGGAIRKKEETHRMAEANKAFAHYR.

This sequence belongs to the universal ribosomal protein uS7 family. Part of the 30S ribosomal subunit.

The protein localises to the plastid. It is found in the chloroplast. One of the primary rRNA binding proteins, it binds directly to 16S rRNA where it nucleates assembly of the head domain of the 30S subunit. In Cyanidioschyzon merolae (strain NIES-3377 / 10D) (Unicellular red alga), this protein is Small ribosomal subunit protein uS7c (rps7).